A 456-amino-acid chain; its full sequence is Senecionine N-oxygenase (456 aa).

A signal peptide spans 1–22 (MFRKFVIMLVLSLLVAAGISQA). Residue 32–37 (GAGYSG) participates in FAD binding. Residue 215–220 (GAGPSG) participates in NADP(+) binding.

The protein belongs to the FMO family. Homotetramer. It depends on FAD as a cofactor. Hemolymph.

The protein resides in the secreted. It carries out the reaction senecionine + NADPH + O2 = senecionine N-oxide + NADP(+) + H2O. In terms of biological role, NADPH-dependent monooxygenase that detoxifies senecionine and similar plant alkaloids that are ingested by the larvae. Is active towards a narrow range of related substrates with highest activity towards senecionine, followed by seneciphylline, retrorsine, monocrotaline, senecivernine, axillarine and axillaridine. The protein is Senecionine N-oxygenase (sno1) of Tyria jacobaeae (Cinnabar moth).